The chain runs to 165 residues: UPF0303 protein Bcep18194_A4700 (165 aa).

Belongs to the UPF0303 family.

The protein is UPF0303 protein Bcep18194_A4700 of Burkholderia lata (strain ATCC 17760 / DSM 23089 / LMG 22485 / NCIMB 9086 / R18194 / 383).